The following is a 181-amino-acid chain: Large ribosomal subunit protein uL10 (181 aa).

The protein belongs to the universal ribosomal protein uL10 family. Part of the ribosomal stalk of the 50S ribosomal subunit. The N-terminus interacts with L11 and the large rRNA to form the base of the stalk. The C-terminus forms an elongated spine to which L12 dimers bind in a sequential fashion forming a multimeric L10(L12)X complex.

Functionally, forms part of the ribosomal stalk, playing a central role in the interaction of the ribosome with GTP-bound translation factors. The chain is Large ribosomal subunit protein uL10 from Chloroflexus aggregans (strain MD-66 / DSM 9485).